The sequence spans 209 residues: MDLITSLQEITKLSHLYYERQWMYATAGNLSTRDGSSRDQFWITASGKHKGELKDTDFVCVSVADGTLLKASDGLKPSAETSIHQVLYSQMPDIGCCLHVHTIDSNLLEFGVGKEEGSREIPIPPIEIIKAFGIWDEKPNLTMPVFYNHTHVPTIADEIKRYFISVGIPKVPFLLIEGHGPTVWGKSIAEANKHLEAVHFLLQVMARKV.

Zn(2+) is bound by residues His-99 and His-101.

This sequence belongs to the aldolase class II family. MtnB subfamily. It depends on Zn(2+) as a cofactor.

The enzyme catalyses 5-(methylsulfanyl)-D-ribulose 1-phosphate = 5-methylsulfanyl-2,3-dioxopentyl phosphate + H2O. Its pathway is amino-acid biosynthesis; L-methionine biosynthesis via salvage pathway; L-methionine from S-methyl-5-thio-alpha-D-ribose 1-phosphate: step 2/6. In terms of biological role, catalyzes the dehydration of methylthioribulose-1-phosphate (MTRu-1-P) into 2,3-diketo-5-methylthiopentyl-1-phosphate (DK-MTP-1-P). This is Methylthioribulose-1-phosphate dehydratase from Leptospira biflexa serovar Patoc (strain Patoc 1 / Ames).